A 418-amino-acid polypeptide reads, in one-letter code: Gamma-glutamyl phosphate reductase (418 aa).

Belongs to the gamma-glutamyl phosphate reductase family.

It localises to the cytoplasm. The enzyme catalyses L-glutamate 5-semialdehyde + phosphate + NADP(+) = L-glutamyl 5-phosphate + NADPH + H(+). The protein operates within amino-acid biosynthesis; L-proline biosynthesis; L-glutamate 5-semialdehyde from L-glutamate: step 2/2. Its function is as follows. Catalyzes the NADPH-dependent reduction of L-glutamate 5-phosphate into L-glutamate 5-semialdehyde and phosphate. The product spontaneously undergoes cyclization to form 1-pyrroline-5-carboxylate. This Pelodictyon phaeoclathratiforme (strain DSM 5477 / BU-1) protein is Gamma-glutamyl phosphate reductase.